The primary structure comprises 75 residues: MIKIRLKRYGKKNRPTYRIVLIESQKPRDSKTIEELGHYDPLLKQANFKFDEIMKRVGQGARLTSRVRYILKQFS.

It belongs to the bacterial ribosomal protein bS16 family.

The protein localises to the plastid. Its subcellular location is the chloroplast. The protein is Small ribosomal subunit protein bS16c of Cyanidium caldarium (Red alga).